We begin with the raw amino-acid sequence, 126 residues long: Large ribosomal subunit protein bL12 (126 aa).

The protein belongs to the bacterial ribosomal protein bL12 family. In terms of assembly, homodimer. Part of the ribosomal stalk of the 50S ribosomal subunit. Forms a multimeric L10(L12)X complex, where L10 forms an elongated spine to which 2 to 4 L12 dimers bind in a sequential fashion. Binds GTP-bound translation factors.

Its function is as follows. Forms part of the ribosomal stalk which helps the ribosome interact with GTP-bound translation factors. Is thus essential for accurate translation. This is Large ribosomal subunit protein bL12 from Koribacter versatilis (strain Ellin345).